The primary structure comprises 190 residues: Putative glutathione-dependent formaldehyde-activating enzyme (190 aa).

Residues 19 to 165 enclose the CENP-V/GFA domain; sequence FKGGKLYCHC…FRKEGLQTYD (147 aa). Residues C26, C28, C47, C49, C52, C94, and C97 each coordinate Zn(2+).

It belongs to the Gfa family. Zn(2+) serves as cofactor.

The catalysed reaction is S-(hydroxymethyl)glutathione = glutathione + formaldehyde. It functions in the pathway one-carbon metabolism; formaldehyde degradation; formate from formaldehyde (glutathione route): step 1/3. Functionally, catalyzes the condensation of formaldehyde and glutathione to S-hydroxymethylglutathione. This chain is Putative glutathione-dependent formaldehyde-activating enzyme, found in Phaeosphaeria nodorum (strain SN15 / ATCC MYA-4574 / FGSC 10173) (Glume blotch fungus).